Here is a 106-residue protein sequence, read N- to C-terminus: UPF0145 protein PputGB1_2909 (106 aa).

Belongs to the UPF0145 family.

The protein is UPF0145 protein PputGB1_2909 of Pseudomonas putida (strain GB-1).